A 248-amino-acid chain; its full sequence is MAQDDEDVGLALGLSLGSGGHRRQRESRDEAPSSAAASLLTLRLPAESGGQPQVVVKREVVRAEEEEYEYEYERALYSSSAAAADDDEGCNSRKKLRLSKEQSALLEDRFKEHSTLNPKQKVALAKQLNLRPRQVEVWFQNRRARTKLKQTEVDCELLKRCCETLTEENRRLHRELQQLRALTHSTAAGFFMATTLPVPAATLSICPSCERLATAAAAAGASPTAAADRTNKPTAPHLFSPFAKSAAC.

The interval 1-44 is disordered; the sequence is MAQDDEDVGLALGLSLGSGGHRRQRESRDEAPSSAAASLLTLRL. The segment covering 32–44 has biased composition (low complexity); it reads PSSAAASLLTLRL. Positions 91–150 form a DNA-binding region, homeobox; it reads NSRKKLRLSKEQSALLEDRFKEHSTLNPKQKVALAKQLNLRPRQVEVWFQNRRARTKLKQ. Positions 149-193 are leucine-zipper; the sequence is KQTEVDCELLKRCCETLTEENRRLHRELQQLRALTHSTAAGFFMA. A disordered region spans residues 223 to 248; sequence PTAAADRTNKPTAPHLFSPFAKSAAC.

The protein belongs to the HD-ZIP homeobox family. Class II subfamily. As to expression, expressed in seedlings, stems, leaf blades and panicles.

It is found in the nucleus. Probable transcription factor. The chain is Homeobox-leucine zipper protein HOX15 (HOX15) from Oryza sativa subsp. indica (Rice).